Consider the following 568-residue polypeptide: Acetyl-coenzyme A carboxylase carboxyl transferase subunits beta/alpha (568 aa).

The segment at 1-253 (MAEPARTLAQ…QTAEYLRDAG (253 aa)) is acetyl-coenzyme A carboxylase carboxyl transferase subunit beta. Residues 21–290 (RWTRCPNCRS…APAAERGYRT (270 aa)) enclose the CoA carboxyltransferase N-terminal domain. Positions 21–536 (RWTRCPNCRS…AAALRASIGE (516 aa)) are carboxyltransferase. Zn(2+) is bound by residues Cys25, Cys28, Cys44, and Cys47. A C4-type zinc finger spans residues 25 to 47 (CPNCRSLVYLRRLRRNGHVCPDC). Residues 254–559 (MVDLVVPRHE…RRRFDRFGDP (306 aa)) are acetyl-coenzyme A carboxylase carboxyl transferase subunit alpha. The CoA carboxyltransferase C-terminal domain occupies 286–536 (RGYRTRPRPA…AAALRASIGE (251 aa)).

This sequence in the N-terminal section; belongs to the AccD/PCCB family. It in the C-terminal section; belongs to the AccA family. In terms of assembly, acetyl-CoA carboxylase is a heterotetramer composed of biotin carboxyl carrier protein (AccB), biotin carboxylase (AccC) and two subunits of ACCase subunit beta/alpha. It depends on Zn(2+) as a cofactor.

Its subcellular location is the cytoplasm. It catalyses the reaction N(6)-carboxybiotinyl-L-lysyl-[protein] + acetyl-CoA = N(6)-biotinyl-L-lysyl-[protein] + malonyl-CoA. It functions in the pathway lipid metabolism; malonyl-CoA biosynthesis; malonyl-CoA from acetyl-CoA: step 1/1. In terms of biological role, component of the acetyl coenzyme A carboxylase (ACC) complex. Biotin carboxylase (BC) catalyzes the carboxylation of biotin on its carrier protein (BCCP) and then the CO(2) group is transferred by the transcarboxylase to acetyl-CoA to form malonyl-CoA. This is Acetyl-coenzyme A carboxylase carboxyl transferase subunits beta/alpha (accD) from Saccharopolyspora erythraea (strain ATCC 11635 / DSM 40517 / JCM 4748 / NBRC 13426 / NCIMB 8594 / NRRL 2338).